Reading from the N-terminus, the 93-residue chain is UPF0367 protein gsr3177 (93 aa).

Belongs to the UPF0367 family.

This is UPF0367 protein gsr3177 from Gloeobacter violaceus (strain ATCC 29082 / PCC 7421).